Here is a 71-residue protein sequence, read N- to C-terminus: Non-structural protein 3x (71 aa).

This Canis lupus familiaris (Dog) protein is Non-structural protein 3x.